The following is a 163-amino-acid chain: Phosphopantetheine adenylyltransferase (163 aa).

Residue serine 9 coordinates substrate. ATP is bound by residues 9-10 (SF) and histidine 17. Residues lysine 41, isoleucine 75, and arginine 89 each contribute to the substrate site. ATP is bound by residues 90–92 (GIR), glutamate 100, and 125–131 (HLYVRSD).

This sequence belongs to the bacterial CoaD family. Homohexamer. Mg(2+) is required as a cofactor.

The protein resides in the cytoplasm. It carries out the reaction (R)-4'-phosphopantetheine + ATP + H(+) = 3'-dephospho-CoA + diphosphate. Its pathway is cofactor biosynthesis; coenzyme A biosynthesis; CoA from (R)-pantothenate: step 4/5. Functionally, reversibly transfers an adenylyl group from ATP to 4'-phosphopantetheine, yielding dephospho-CoA (dPCoA) and pyrophosphate. The sequence is that of Phosphopantetheine adenylyltransferase from Borrelia garinii subsp. bavariensis (strain ATCC BAA-2496 / DSM 23469 / PBi) (Borreliella bavariensis).